A 110-amino-acid polypeptide reads, in one-letter code: uncharacterized protein (110 aa).

This is an uncharacterized protein from Saccharomyces cerevisiae (strain ATCC 204508 / S288c) (Baker's yeast).